The sequence spans 216 residues: Small ribosomal subunit protein uS3c (216 aa).

The 74-residue stretch at Ile-43–Ala-116 folds into the KH type-2 domain.

Belongs to the universal ribosomal protein uS3 family. As to quaternary structure, part of the 30S ribosomal subunit.

The protein localises to the plastid. It is found in the chloroplast. This Drimys granadensis protein is Small ribosomal subunit protein uS3c (rps3).